We begin with the raw amino-acid sequence, 225 residues long: Techylectin-like protein (225 aa).

The 194-residue stretch at 32–225 folds into the Fibrinogen C-terminal domain; sequence CPSPPLPIDC…WTEIKIKDVK (194 aa). The cysteines at positions 41 and 60 are disulfide-linked. Residues 75 to 77 carry the Cell attachment site motif; sequence RGD. 2 residues coordinate Ca(2+): Asp-164 and Thr-170. Cysteines 172 and 185 form a disulfide.

As to expression, expressed by the venom gland.

Its subcellular location is the secreted. In terms of biological role, lectin involved in innate immunity. The protein is Techylectin-like protein of Phoneutria nigriventer (Brazilian armed spider).